Reading from the N-terminus, the 127-residue chain is MKQKILGITIAFIILLLTTVAILFSVKVKQYLNVNLWTTQQQNFLMFKNEKDENLFNNVSWTNFQAETTEKSAKKAFRLYKKKISTSEISSELNKNLVKVDLSVTLEQGWYNITIMLPSKDLFEVIF.

A helical membrane pass occupies residues 5–25; sequence ILGITIAFIILLLTTVAILFS.

The protein resides in the membrane. This is an uncharacterized protein from Mycoplasma genitalium (strain ATCC 33530 / DSM 19775 / NCTC 10195 / G37) (Mycoplasmoides genitalium).